The following is a 126-amino-acid chain: Large ribosomal subunit protein uL22 (126 aa).

It belongs to the universal ribosomal protein uL22 family. Part of the 50S ribosomal subunit.

This protein binds specifically to 23S rRNA; its binding is stimulated by other ribosomal proteins, e.g. L4, L17, and L20. It is important during the early stages of 50S assembly. It makes multiple contacts with different domains of the 23S rRNA in the assembled 50S subunit and ribosome. In terms of biological role, the globular domain of the protein is located near the polypeptide exit tunnel on the outside of the subunit, while an extended beta-hairpin is found that lines the wall of the exit tunnel in the center of the 70S ribosome. The chain is Large ribosomal subunit protein uL22 from Cereibacter sphaeroides (strain ATCC 17029 / ATH 2.4.9) (Rhodobacter sphaeroides).